Reading from the N-terminus, the 176-residue chain is Cytidylate kinase (176 aa).

7-15 (GPPGSGTTS) is an ATP binding site.

The protein belongs to the cytidylate kinase family. Type 2 subfamily.

It localises to the cytoplasm. It carries out the reaction CMP + ATP = CDP + ADP. The enzyme catalyses dCMP + ATP = dCDP + ADP. In Methanosphaerula palustris (strain ATCC BAA-1556 / DSM 19958 / E1-9c), this protein is Cytidylate kinase.